Reading from the N-terminus, the 404-residue chain is MMFVTGIVLFALAILISVALHECGHMWVARRTGMKVRRYFVGFGPTLWSTRRGETEYGVKAVPLGGFCDIAGMTPVEELDPDERDRAMYKQATWKRVAVLFAGPGMNLAICLVLIYAIALVWGLPNLHPPTRAVIGETGCVAQEVSQGKLEQCTGPGPAALAGIRSGDVVVKVGDTPVSSFDEMAAAVRKSHGSVPIVVERDGTAIVTYVDIESTQRWIPNGQGGELQPATVGAIGVGAARVGPVRYGVFSAMPATFAVTGDLTVEVGKALAALPTKVGALVRAIGGGQRDPQTPISVVGASIIGGDTVDHGLWVAFWFFLAQLNLILAAINLLPLLPFDGGHIAVAVFERIRNMVRSARGKVAAAPVNYLKLLPATYVVLVLVVGYMLLTVTADLVNPIRLFQ.

Residues 1 to 21 (MMFVTGIVLFALAILISVALH) traverse the membrane as a helical segment. Position 21 (H21) interacts with Zn(2+). E22 is an active-site residue. Residue H25 coordinates Zn(2+). Residues 104–124 (PGMNLAICLVLIYAIALVWGL) traverse the membrane as a helical segment. Residues 121–203 (VWGLPNLHPP…SVPIVVERDG (83 aa)) enclose the PDZ domain. A Zn(2+)-binding site is contributed by D202. 2 helical membrane-spanning segments follow: residues 313–333 (LWVA…AINL) and 373–393 (LLPA…LTVT).

The protein belongs to the peptidase M50B family. Zn(2+) serves as cofactor.

It is found in the cell membrane. In terms of biological role, a probable site-2 protease (S2P) that cleaves type-2 transmembrane proteins within their membrane-spanning domains. Degrades anti-sigma factors RskA, RslA and RsmA, releasing sigma factors SigK, SigL and SigM from the cellular membrane, activating signaling pathways. Does not act on RsdA. Regulates the composition of extractable mycolic acids in the cell envelope in response to changes in membrane fluidity. Mediates transcriptional regulation of mycolic acid biosynthetic genes in response to detergent. Probably also cleaves PbpB (PBP3, FtsI); this cleavage is inhibited by Wag31-PbpBI interaction. Functionally, regulated intramembrane proteolysis (RIP) occurs when an extracytoplasmic signal (possibly oxidative stress) triggers a concerted proteolytic cascade to transmit information and elicit cellular responses. The membrane-spanning regulatory substrate protein (includes anti-sigma factors RskA, RslA, RsmA, and PbpB) is first cut extracytoplasmically (site-1 protease, S1P), then within the membrane itself (site-2 protease, S2P, this entry), while cytoplasmic proteases finish degrading the regulatory protein, liberating the effector protein (ECF sigma factors SigK, SigL and SigM). This chain is Zinc metalloprotease Rip1 (rip1), found in Mycobacterium tuberculosis (strain ATCC 35801 / TMC 107 / Erdman).